We begin with the raw amino-acid sequence, 75 residues long: Transcription attenuation protein MtrB (75 aa).

The protein belongs to the MtrB family. Oligomer of 11 identical subunits arranged in doughnut-like structure.

Its function is as follows. Required for transcription attenuation control in the trp operon. This trans-acting factor binds to trinucleotide repeats (GAG or UAG) located in the trp leader transcript causing transcription termination. Binds the leader RNA only in presence of L-tryptophan. This is Transcription attenuation protein MtrB (mtrB) from Bacillus subtilis (strain 168).